Consider the following 123-residue polypeptide: uncharacterized protein (123 aa).

Positions 36 to 76 (VDRQENKKEFLSAEEAREKFKELINQVRSWKEQMSTLSKYA) form a coiled coil.

This is an uncharacterized protein from Aquifex aeolicus (strain VF5).